The primary structure comprises 682 residues: E3 ubiquitin ligase Rnf157 (682 aa).

Gly2 is lipidated: N-myristoyl glycine. Residues 277–317 (CVVCLSDVRDTLILPCRHCASCNVHCADTLRYQANNCPICR) form an RING-type; degenerate zinc finger. The short motif at 330 to 333 (RKKL) is the D-box 1 element. Disordered stretches follow at residues 440–604 (QNSS…VQED) and 655–682 (NTQR…PLAV). Over residues 479–538 (ESENLTLSSSGAVDQSSCTGTPLSSTISSPEDPASSSLAQSVMSMASSQISTDTVSSMSG) the composition is skewed to polar residues. Positions 585–597 (QDAEGNDIMEEED) are enriched in acidic residues. The D-box 2 motif lies at 658–661 (RRRL). A phosphoserine mark is found at Ser662, Ser664, and Ser665.

As to quaternary structure, interacts with APBB1. Interacts with CHD1; CHD1-binding controls RNF157 stability. Also interacts with ATRN, MEGF8, TECR, MSI2, PLRG1, BYSL, MTERF3, PSMA1, MRPS18B, PRPF4, FASTKD2, SLC25A1, SMU1, CNOT9, MRPS2, MAGT1, FXR2, EMD, PSMD8, HDAC1, RAN, HSD17B12, TXNDC5 and MRPL19. As to expression, predominantly expressed in the brain.

Its subcellular location is the cytoplasm. The catalysed reaction is S-ubiquitinyl-[E2 ubiquitin-conjugating enzyme]-L-cysteine + [acceptor protein]-L-lysine = [E2 ubiquitin-conjugating enzyme]-L-cysteine + N(6)-ubiquitinyl-[acceptor protein]-L-lysine.. In terms of biological role, E3 ubiquitin ligase that ubiquitinates APBB1 for its degradation by the proteasome and thus prevents apoptosis and promotes survival of neurons. Has a dual role in neurons as it is also required for dendrite growth and maintenance for which its ligase activity is not critical. May act as a scaffold molecule to regulate this process. Acts as a downstream effector of the interconnected PI3K and MAPK signaling pathways and thus participates in the regulation of the cell cycle. The chain is E3 ubiquitin ligase Rnf157 (Rnf157) from Rattus norvegicus (Rat).